A 256-amino-acid chain; its full sequence is Ubiquinone/menaquinone biosynthesis C-methyltransferase UbiE (256 aa).

Positions 1–19 (MQNRSSSPDSSSAGNTHFG) are enriched in polar residues. Residues 1–24 (MQNRSSSPDSSSAGNTHFGFQSVP) form a disordered region. Residues Thr81, Asp102, and 128–129 (DA) each bind S-adenosyl-L-methionine.

This sequence belongs to the class I-like SAM-binding methyltransferase superfamily. MenG/UbiE family.

It catalyses the reaction a 2-demethylmenaquinol + S-adenosyl-L-methionine = a menaquinol + S-adenosyl-L-homocysteine + H(+). The enzyme catalyses a 2-methoxy-6-(all-trans-polyprenyl)benzene-1,4-diol + S-adenosyl-L-methionine = a 5-methoxy-2-methyl-3-(all-trans-polyprenyl)benzene-1,4-diol + S-adenosyl-L-homocysteine + H(+). The protein operates within quinol/quinone metabolism; menaquinone biosynthesis; menaquinol from 1,4-dihydroxy-2-naphthoate: step 2/2. Its pathway is cofactor biosynthesis; ubiquinone biosynthesis. Methyltransferase required for the conversion of demethylmenaquinol (DMKH2) to menaquinol (MKH2) and the conversion of 2-polyprenyl-6-methoxy-1,4-benzoquinol (DDMQH2) to 2-polyprenyl-3-methyl-6-methoxy-1,4-benzoquinol (DMQH2). The polypeptide is Ubiquinone/menaquinone biosynthesis C-methyltransferase UbiE (Bordetella avium (strain 197N)).